A 166-amino-acid polypeptide reads, in one-letter code: Phospholipase A2 inhibitor clone 04 (166 aa).

Residues M1–G19 form the signal peptide. Positions L46 to E161 constitute a C-type lectin domain. 2 cysteine pairs are disulfide-bonded: C83–C160 and C138–C152. N122 carries N-linked (GlcNAc...) asparagine glycosylation.

The protein belongs to the alpha-type phospholipase A2 inhibitor family. In terms of assembly, homotrimer; non-covalently linked. As to expression, expressed by the liver.

Its subcellular location is the secreted. In terms of biological role, this phospholipase A2 inhibitor binds directly phospholipase A2 in the presence or absence of calcium. The chain is Phospholipase A2 inhibitor clone 04 from Bothrops moojeni (Lance-headed viper).